The primary structure comprises 25 residues: Ocellatin-P1 (25 aa).

At Leu25 the chain carries Leucine amide.

Expressed by the skin glands.

It localises to the secreted. Its function is as follows. Antibacterial peptide that inhibits reference strains of both Gram-negative bacteria (E.coli, E.cloacae, K.pneumoniae, P.aeruginosa) and Gram-positive bacteria (S.aureus, S.epidermidis, E.faecalis, Streptococcus group B) with relatively low potencies (MIC=25-200 uM). The peptide shows very low hemolytic activity against human erythrocytes. Wheel projection demonstrates the amphipathicity of the alpha-helices is low which may explain the low antibacterial potency. The protein is Ocellatin-P1 of Leptodactylus pentadactylus (Smokey jungle frog).